The chain runs to 178 residues: MAELTTLARPYAKAVFDAAQDQNAVDQWDQALAFAAQVAADQEVKNILANPGLSEQRKAELFAECFEEPLPEALRNFLLILAENKRLALLPEISALFRLYRADLEKSVHLTIDTAFDLSADEQQKLIDALSKKLERKVELETTVDQSLIGGVIVRTGDLVIDASVRGKLARMARALGS.

It belongs to the ATPase delta chain family. As to quaternary structure, F-type ATPases have 2 components, F(1) - the catalytic core - and F(0) - the membrane proton channel. F(1) has five subunits: alpha(3), beta(3), gamma(1), delta(1), epsilon(1). F(0) has three main subunits: a(1), b(2) and c(10-14). The alpha and beta chains form an alternating ring which encloses part of the gamma chain. F(1) is attached to F(0) by a central stalk formed by the gamma and epsilon chains, while a peripheral stalk is formed by the delta and b chains.

Its subcellular location is the cell inner membrane. F(1)F(0) ATP synthase produces ATP from ADP in the presence of a proton or sodium gradient. F-type ATPases consist of two structural domains, F(1) containing the extramembraneous catalytic core and F(0) containing the membrane proton channel, linked together by a central stalk and a peripheral stalk. During catalysis, ATP synthesis in the catalytic domain of F(1) is coupled via a rotary mechanism of the central stalk subunits to proton translocation. In terms of biological role, this protein is part of the stalk that links CF(0) to CF(1). It either transmits conformational changes from CF(0) to CF(1) or is implicated in proton conduction. In Marinobacter nauticus (strain ATCC 700491 / DSM 11845 / VT8) (Marinobacter aquaeolei), this protein is ATP synthase subunit delta.